The following is a 186-amino-acid chain: Ribosome-recycling factor (186 aa).

The protein belongs to the RRF family.

It localises to the cytoplasm. Its function is as follows. Responsible for the release of ribosomes from messenger RNA at the termination of protein biosynthesis. May increase the efficiency of translation by recycling ribosomes from one round of translation to another. The chain is Ribosome-recycling factor from Chlorobaculum parvum (strain DSM 263 / NCIMB 8327) (Chlorobium vibrioforme subsp. thiosulfatophilum).